The primary structure comprises 112 residues: Putative pterin-4-alpha-carbinolamine dehydratase (112 aa).

This sequence belongs to the pterin-4-alpha-carbinolamine dehydratase family.

It catalyses the reaction (4aS,6R)-4a-hydroxy-L-erythro-5,6,7,8-tetrahydrobiopterin = (6R)-L-erythro-6,7-dihydrobiopterin + H2O. In Shewanella putrefaciens (strain CN-32 / ATCC BAA-453), this protein is Putative pterin-4-alpha-carbinolamine dehydratase.